Reading from the N-terminus, the 179-residue chain is Inner membrane-spanning protein YciB (179 aa).

5 helical membrane-spanning segments follow: residues 22–42, 50–70, 76–96, 121–141, and 149–169; these read IYAA…YSWV, MALI…FFHN, WKVT…QWVM, LAWA…AFWL, and FKVF…GVYI.

This sequence belongs to the YciB family.

It localises to the cell inner membrane. In terms of biological role, plays a role in cell envelope biogenesis, maintenance of cell envelope integrity and membrane homeostasis. The polypeptide is Inner membrane-spanning protein YciB (Escherichia fergusonii (strain ATCC 35469 / DSM 13698 / CCUG 18766 / IAM 14443 / JCM 21226 / LMG 7866 / NBRC 102419 / NCTC 12128 / CDC 0568-73)).